Here is a 352-residue protein sequence, read N- to C-terminus: Iron-sulfur cluster carrier protein (352 aa).

Residue 114–121 (GKGGVGKS) coordinates ATP.

The protein belongs to the Mrp/NBP35 ATP-binding proteins family. As to quaternary structure, homodimer. Interacts with BrxC.

In terms of biological role, binds and transfers iron-sulfur (Fe-S) clusters to target apoproteins. Can hydrolyze ATP. Functionally, negatively regulates the expression of hpr/scoC. The effect on hpr/scoC may be indirect. This Bacillus subtilis (strain 168) protein is Iron-sulfur cluster carrier protein (salA).